A 303-amino-acid polypeptide reads, in one-letter code: Probable phytol kinase, chloroplastic (303 aa).

Residues 1-49 (MAAAAAWTGAASPNSLLLSRSPPHAAALAPSPGSSMRRRLLLGVGTPAV) constitute a chloroplast transit peptide. A run of 6 helical transmembrane segments spans residues 98–118 (VVHV…SNST), 122–144 (YFAA…RLYT), 168–188 (YVLV…IGIV), 227–247 (FISG…LGYI), 254–274 (ALGK…VPVT), and 276–296 (VVDD…LLFS).

The protein belongs to the polyprenol kinase family.

It localises to the plastid. The protein localises to the chloroplast membrane. The catalysed reaction is phytol + CTP = phytyl phosphate + CDP + H(+). It participates in cofactor biosynthesis; tocopherol biosynthesis. Functionally, involved in the activation and reutilization of phytol from chlorophyll degradation in plant metabolism, including tocopherol biosynthesis. Catalyzes the conversion of phytol to phytol monophosphate (PMP). The polypeptide is Probable phytol kinase, chloroplastic (Zea mays (Maize)).